The following is a 92-amino-acid chain: Small ribosomal subunit protein uS19c (92 aa).

Belongs to the universal ribosomal protein uS19 family.

It localises to the plastid. The protein localises to the chloroplast. Its function is as follows. Protein S19 forms a complex with S13 that binds strongly to the 16S ribosomal RNA. The chain is Small ribosomal subunit protein uS19c from Manihot esculenta (Cassava).